The sequence spans 776 residues: Endonuclease MutS2 (776 aa).

330–337 (GPNTGGKT) lines the ATP pocket. One can recognise a Smr domain in the interval 701–776 (LDLRGMRYEE…GSGATIAILK (76 aa)).

Belongs to the DNA mismatch repair MutS family. MutS2 subfamily. In terms of assembly, homodimer. Binds to stalled ribosomes, contacting rRNA.

Endonuclease that is involved in the suppression of homologous recombination and thus may have a key role in the control of bacterial genetic diversity. In terms of biological role, acts as a ribosome collision sensor, splitting the ribosome into its 2 subunits. Detects stalled/collided 70S ribosomes which it binds and splits by an ATP-hydrolysis driven conformational change. Acts upstream of the ribosome quality control system (RQC), a ribosome-associated complex that mediates the extraction of incompletely synthesized nascent chains from stalled ribosomes and their subsequent degradation. Probably generates substrates for RQC. This chain is Endonuclease MutS2, found in Lactococcus lactis subsp. lactis (strain IL1403) (Streptococcus lactis).